A 277-amino-acid chain; its full sequence is UPF0276 protein PSEEN3355 (277 aa).

This sequence belongs to the UPF0276 family.

This Pseudomonas entomophila (strain L48) protein is UPF0276 protein PSEEN3355.